We begin with the raw amino-acid sequence, 172 residues long: Translationally-controlled tumor protein homolog (172 aa).

The TCTP domain maps to 1-172 (MKIYKDIITG…FKHGLEEEKC (172 aa)). The residue at position 50 (serine 50) is a Phosphoserine. Residues threonine 58 and threonine 61 each carry the phosphothreonine modification.

This sequence belongs to the TCTP family.

It is found in the cytoplasm. Involved in calcium binding and microtubule stabilization. This Drosophila melanogaster (Fruit fly) protein is Translationally-controlled tumor protein homolog (Tctp).